The sequence spans 280 residues: Urease accessory protein UreD (280 aa).

This sequence belongs to the UreD family. In terms of assembly, ureD, UreF and UreG form a complex that acts as a GTP-hydrolysis-dependent molecular chaperone, activating the urease apoprotein by helping to assemble the nickel containing metallocenter of UreC. The UreE protein probably delivers the nickel.

It localises to the cytoplasm. Functionally, required for maturation of urease via the functional incorporation of the urease nickel metallocenter. The polypeptide is Urease accessory protein UreD (Pseudomonas aeruginosa (strain ATCC 15692 / DSM 22644 / CIP 104116 / JCM 14847 / LMG 12228 / 1C / PRS 101 / PAO1)).